A 1286-amino-acid chain; its full sequence is Ankyrin-repeat and fibronectin type III domain-containing 1 (1286 aa).

2 ANK repeats span residues 274–303 (QGNEAMFEAVEQQDLDAVQLLLYQYTPEEL) and 311–340 (EGLTPLDIAIMTNNVPIARILLRTGARESP). Positions 411–507 (VPANACLMVS…TTTPVCASPS (97 aa)) constitute a Fibronectin type-III domain. The segment at 748–755 (GLYLGYLK) is highly conserved peptide sequence. Positions 999–1011 (SSHIDCLPSTSPS) are enriched in polar residues. Disordered stretches follow at residues 999 to 1032 (SSHIDCLPSTSPSPEMHRRKAVSESQPCSDEEGC), 1086 to 1106 (KASMGPGQDPQGPGQGPDTDH), 1187 to 1207 (AEDPGEAEGPGPVVDGPRGLP), and 1242 to 1286 (AGQD…SSML). Residues 1260-1277 (SSLPSSTSSEMSPDPTSP) show a composition bias toward low complexity.

As to expression, expressed in both the suprachiasmatic nucleus and dorsal medial hypothalamus.

In terms of biological role, may play a role in neuronal function. This chain is Ankyrin-repeat and fibronectin type III domain-containing 1, found in Mus musculus (Mouse).